Here is a 396-residue protein sequence, read N- to C-terminus: Elongation factor Tu (396 aa).

The tr-type G domain occupies 10–206; that stretch reads KPHCNIGTIG…NVDEYIPQPE (197 aa). The interval 19-26 is G1; it reads GHVDHGKT. 19-26 lines the GTP pocket; that stretch reads GHVDHGKT. Threonine 26 contacts Mg(2+). The segment at 60–64 is G2; sequence GITIS. The interval 81–84 is G3; sequence DCPG. GTP contacts are provided by residues 81 to 85 and 136 to 139; these read DCPGH and NKCD. Positions 136–139 are G4; the sequence is NKCD. Residues 174–176 form a G5 region; the sequence is SAL.

The protein belongs to the TRAFAC class translation factor GTPase superfamily. Classic translation factor GTPase family. EF-Tu/EF-1A subfamily. Monomer.

The protein resides in the cytoplasm. The enzyme catalyses GTP + H2O = GDP + phosphate + H(+). Its function is as follows. GTP hydrolase that promotes the GTP-dependent binding of aminoacyl-tRNA to the A-site of ribosomes during protein biosynthesis. The sequence is that of Elongation factor Tu from Bradyrhizobium diazoefficiens (strain JCM 10833 / BCRC 13528 / IAM 13628 / NBRC 14792 / USDA 110).